The following is a 499-amino-acid chain: Putative antiporter subunit mnhD2 (499 aa).

14 helical membrane-spanning segments follow: residues 1-21, 31-51, 77-97, 107-127, 129-149, 160-180, 208-228, 239-259, 272-292, 307-327, 329-349, 367-387, 402-422, and 449-469; these read MSNL…ILVF, ILSI…LIYV, LSLL…AYGF, FHLP…FLTS, LFNL…LVTL, IVYV…IGML, ISLV…FMWL, LAAL…IRFF, TLLV…VIAY, IGFI…GAIF, LAND…LVYM, FFGV…PFSG, GNYI…YSLF, and GLLS…PVVL.

The protein belongs to the CPA3 antiporters (TC 2.A.63) subunit D family. As to quaternary structure, may form a heterooligomeric complex that consists of seven subunits: mnhA2, mnhB2, mnhC2, mnhD2, mnhE2, mnhF2 and mnhG2.

It is found in the cell membrane. This chain is Putative antiporter subunit mnhD2 (mnhD2), found in Staphylococcus epidermidis (strain ATCC 35984 / DSM 28319 / BCRC 17069 / CCUG 31568 / BM 3577 / RP62A).